Here is a 241-residue protein sequence, read N- to C-terminus: Alpha/beta-tubulin-N-acetyltransferase 9 (241 aa).

Residues 34–181 (EELRHLTASE…VTLRLAVSEP (148 aa)) enclose the N-acetyltransferase domain.

Belongs to the acetyltransferase family. GNAT subfamily.

It carries out the reaction N-terminal L-methionyl-[tubulin] + acetyl-CoA = N-terminal N(alpha)-acetyl-L-methionyl-[tubulin] + CoA + H(+). In terms of biological role, N-acetyltransferase that mediates the acetylation of the N-terminal residues of alpha- and beta-tubulin. The polypeptide is Alpha/beta-tubulin-N-acetyltransferase 9 (Nat9) (Mus musculus (Mouse)).